A 441-amino-acid polypeptide reads, in one-letter code: Serine carboxypeptidase-like 2 (441 aa).

The signal sequence occupies residues 1-29 (MANKYFSSVLKSLLLLLHLVFLSKQHVDS). 3 disulfide bridges follow: C88-C331, C252-C266, and C290-C297. N-linked (GlcNAc...) asparagine glycosylation is present at N109. S184 is an active-site residue. Residue N350 is glycosylated (N-linked (GlcNAc...) asparagine). The active site involves D366. A glycan (N-linked (GlcNAc...) asparagine) is linked at N382. H419 is a catalytic residue.

Belongs to the peptidase S10 family. In terms of tissue distribution, expressed in seedlings and roots.

It is found in the secreted. Functionally, probable carboxypeptidase. The chain is Serine carboxypeptidase-like 2 (SCPL2) from Arabidopsis thaliana (Mouse-ear cress).